The primary structure comprises 209 residues: Guanylate kinase (209 aa).

One can recognise a Guanylate kinase-like domain in the interval 10 to 189 (GLLLVLSAPS…AFSDLRSVVV (180 aa)). 17-24 (APSGAGKT) provides a ligand contact to ATP.

This sequence belongs to the guanylate kinase family.

Its subcellular location is the cytoplasm. It carries out the reaction GMP + ATP = GDP + ADP. Its function is as follows. Essential for recycling GMP and indirectly, cGMP. The protein is Guanylate kinase of Myxococcus xanthus (strain DK1622).